A 279-amino-acid chain; its full sequence is uncharacterized protein (279 aa).

Residues Arg60–Asn92 form a disordered region. The span at Asp70–Ile85 shows a compositional bias: polar residues. The next 3 helical transmembrane spans lie at Ile156–Asn176, Ile202–Leu222, and Phe237–Ile257.

The protein localises to the cell membrane. This is an uncharacterized protein from Mycoplasma genitalium (strain ATCC 33530 / DSM 19775 / NCTC 10195 / G37) (Mycoplasmoides genitalium).